Here is a 150-residue protein sequence, read N- to C-terminus: Large ribosomal subunit protein uL11 (150 aa).

Belongs to the universal ribosomal protein uL11 family. In terms of assembly, part of the ribosomal stalk of the 50S ribosomal subunit. Interacts with L10 and the large rRNA to form the base of the stalk. L10 forms an elongated spine to which L12 dimers bind in a sequential fashion forming a multimeric L10(L12)X complex. In terms of processing, one or more lysine residues are methylated.

Its function is as follows. Forms part of the ribosomal stalk which helps the ribosome interact with GTP-bound translation factors. In Ureaplasma parvum serovar 3 (strain ATCC 27815 / 27 / NCTC 11736), this protein is Large ribosomal subunit protein uL11.